Reading from the N-terminus, the 279-residue chain is Ribosomal RNA small subunit methyltransferase J (279 aa).

S-adenosyl-L-methionine contacts are provided by residues 138–139 and Asp194; that span reads ER.

Belongs to the methyltransferase superfamily. RsmJ family.

It localises to the cytoplasm. It catalyses the reaction guanosine(1516) in 16S rRNA + S-adenosyl-L-methionine = N(2)-methylguanosine(1516) in 16S rRNA + S-adenosyl-L-homocysteine + H(+). In terms of biological role, specifically methylates the guanosine in position 1516 of 16S rRNA. In Acinetobacter baumannii (strain ACICU), this protein is Ribosomal RNA small subunit methyltransferase J.